Consider the following 84-residue polypeptide: Cytochrome b559 subunit alpha (84 aa).

The chain crosses the membrane as a helical span at residues 22-36 (VIHSITIPSLFVAGW). Histidine 24 serves as a coordination point for heme.

The protein belongs to the PsbE/PsbF family. As to quaternary structure, heterodimer of an alpha subunit and a beta subunit. PSII is composed of 1 copy each of membrane proteins PsbA, PsbB, PsbC, PsbD, PsbE, PsbF, PsbH, PsbI, PsbJ, PsbK, PsbL, PsbM, PsbT, PsbX, PsbY, PsbZ, Psb30/Ycf12, at least 3 peripheral proteins of the oxygen-evolving complex and a large number of cofactors. It forms dimeric complexes. It depends on heme b as a cofactor.

Its subcellular location is the plastid. It localises to the chloroplast thylakoid membrane. In terms of biological role, this b-type cytochrome is tightly associated with the reaction center of photosystem II (PSII). PSII is a light-driven water:plastoquinone oxidoreductase that uses light energy to abstract electrons from H(2)O, generating O(2) and a proton gradient subsequently used for ATP formation. It consists of a core antenna complex that captures photons, and an electron transfer chain that converts photonic excitation into a charge separation. This Gracilaria tenuistipitata var. liui (Red alga) protein is Cytochrome b559 subunit alpha.